The following is a 609-amino-acid chain: Phosphoenolpyruvate carboxykinase [GTP] (609 aa).

Substrate contacts are provided by residues Arg-81 and 220 to 222 (YGG). Residues Lys-229 and His-249 each coordinate Mn(2+). Ser-271 serves as a coordination point for substrate. 272 to 277 (ACGKTN) is a GTP binding site. Cys-273 is an active-site residue. Residue Asp-296 coordinates Mn(2+). 387 to 389 (NSR) serves as a coordination point for substrate. GTP contacts are provided by residues Arg-389, Arg-420, and 515 to 518 (FGEN).

The protein belongs to the phosphoenolpyruvate carboxykinase [GTP] family. Monomer. The cofactor is Mn(2+).

The protein resides in the cytoplasm. The enzyme catalyses oxaloacetate + GTP = phosphoenolpyruvate + GDP + CO2. The protein operates within carbohydrate biosynthesis; gluconeogenesis. Functionally, catalyzes the conversion of oxaloacetate (OAA) to phosphoenolpyruvate (PEP), the rate-limiting step in the metabolic pathway that produces glucose from lactate and other precursors derived from the citric acid cycle. The protein is Phosphoenolpyruvate carboxykinase [GTP] of Mycobacterium ulcerans (strain Agy99).